The following is a 433-amino-acid chain: Serine/threonine-protein kinase KDX1 (433 aa).

The Protein kinase domain occupies 23–318 (FHLTGKIGRG…VEDALEHPYL (296 aa)). ATP is bound by residues 29–37 (IGRGSHSLI) and Lys55. Asp153 acts as the Proton acceptor in catalysis.

The protein belongs to the protein kinase superfamily. Ser/Thr protein kinase family. In terms of assembly, interacts with RLM1.

The enzyme catalyses L-seryl-[protein] + ATP = O-phospho-L-seryl-[protein] + ADP + H(+). The catalysed reaction is L-threonyl-[protein] + ATP = O-phospho-L-threonyl-[protein] + ADP + H(+). Its function is as follows. Serine/threonine-protein kinase involved in the SLT2 mitogen-activated (MAP) kinase signaling pathway that regulates cell wall integrity. May also be involved in the mating pheromone and the CWI MAPK pathways. This chain is Serine/threonine-protein kinase KDX1 (KDX1), found in Saccharomyces cerevisiae (strain ATCC 204508 / S288c) (Baker's yeast).